The chain runs to 369 residues: Glutamate 5-kinase (369 aa).

Lys-14 lines the ATP pocket. 3 residues coordinate substrate: Ser-54, Asp-141, and Asn-153. Residues 173-174 (SD) and 215-221 (TGGMVTK) each bind ATP. The region spanning 277–355 (RGRLHLDPGA…SELATALGPA (79 aa)) is the PUA domain.

Belongs to the glutamate 5-kinase family.

It localises to the cytoplasm. It catalyses the reaction L-glutamate + ATP = L-glutamyl 5-phosphate + ADP. It functions in the pathway amino-acid biosynthesis; L-proline biosynthesis; L-glutamate 5-semialdehyde from L-glutamate: step 1/2. Its function is as follows. Catalyzes the transfer of a phosphate group to glutamate to form L-glutamate 5-phosphate. This chain is Glutamate 5-kinase, found in Salinispora arenicola (strain CNS-205).